Here is an 880-residue protein sequence, read N- to C-terminus: Alanine--tRNA ligase (880 aa).

The Zn(2+) site is built by His-567, His-571, Cys-669, and His-673.

It belongs to the class-II aminoacyl-tRNA synthetase family. The cofactor is Zn(2+).

The protein localises to the cytoplasm. It carries out the reaction tRNA(Ala) + L-alanine + ATP = L-alanyl-tRNA(Ala) + AMP + diphosphate. Catalyzes the attachment of alanine to tRNA(Ala) in a two-step reaction: alanine is first activated by ATP to form Ala-AMP and then transferred to the acceptor end of tRNA(Ala). Also edits incorrectly charged Ser-tRNA(Ala) and Gly-tRNA(Ala) via its editing domain. The chain is Alanine--tRNA ligase from Bacillus thuringiensis subsp. konkukian (strain 97-27).